A 165-amino-acid chain; its full sequence is MDEVPSSDESKSASSGKRVLEQSVHELEEVFKKFDANGDGKISGSELADILRSMGSEVDEAEVKAMMEEADTDGDGYVSLQEFVDLNIKGATVKDLKNAFKVFDRDCNGTISPAELCETLKSVGEPCTIEESKNIIHNVDKNGDGLINVEEFQTMMTSEMTDKSK.

4 consecutive EF-hand domains span residues 22–57, 58–86, 91–126, and 127–162; these read QSVH…MGSE, VDEA…FVDL, ATVK…VGEP, and CTIE…EMTD. Residues aspartate 35, asparagine 37, aspartate 39, lysine 41, glutamate 46, aspartate 71, aspartate 73, aspartate 75, tyrosine 77, glutamate 82, aspartate 104, aspartate 106, asparagine 108, threonine 110, glutamate 115, aspartate 140, asparagine 142, aspartate 144, and glutamate 151 each contribute to the Ca(2+) site.

May exist as monomer and dimer. As to expression, expressed in mature pollen grains.

In Hesperocyparis arizonica (Arizona cypress), this protein is Polcalcin Cup a 4.